Reading from the N-terminus, the 123-residue chain is Putative EG45-like domain containing protein 1 (123 aa).

The signal sequence occupies residues 1–21 (MSKSIVFFSTVLVFLFSFSYA). Residues 24-123 (GIATFYTSYT…AGIINIDYFP (100 aa)) enclose the Expansin-like EG45 domain.

It is found in the secreted. In terms of biological role, might have a systemic role in water and solute homeostasis. This is Putative EG45-like domain containing protein 1 (EGC1) from Arabidopsis thaliana (Mouse-ear cress).